Reading from the N-terminus, the 120-residue chain is Glycine cleavage system H protein (120 aa).

The 83-residue stretch at 19-101 folds into the Lipoyl-binding domain; it reads DGTVGISDFA…YTDGWLFRLD (83 aa). Position 60 is an N6-lipoyllysine (K60).

This sequence belongs to the GcvH family. In terms of assembly, the glycine cleavage system is composed of four proteins: P, T, L and H. Requires (R)-lipoate as cofactor.

In terms of biological role, the glycine cleavage system catalyzes the degradation of glycine. The H protein shuttles the methylamine group of glycine from the P protein to the T protein. This Deinococcus geothermalis (strain DSM 11300 / CIP 105573 / AG-3a) protein is Glycine cleavage system H protein.